The sequence spans 71 residues: DNA gyrase inhibitor YacG (71 aa).

The Zn(2+) site is built by cysteine 9, cysteine 12, cysteine 28, and cysteine 32. The interval glutamate 43–asparagine 71 is disordered. Residues asparagine 54–glutamate 64 show a composition bias toward acidic residues.

This sequence belongs to the DNA gyrase inhibitor YacG family. In terms of assembly, interacts with GyrB. Zn(2+) serves as cofactor.

Inhibits all the catalytic activities of DNA gyrase by preventing its interaction with DNA. Acts by binding directly to the C-terminal domain of GyrB, which probably disrupts DNA binding by the gyrase. In Proteus mirabilis (strain HI4320), this protein is DNA gyrase inhibitor YacG.